The primary structure comprises 131 residues: Profilin-3 (131 aa).

This sequence belongs to the profilin family. As to quaternary structure, occurs in many kinds of cells as a complex with monomeric actin in a 1:1 ratio.

It localises to the cytoplasm. The protein resides in the cytoskeleton. Functionally, binds to actin and affects the structure of the cytoskeleton. At high concentrations, profilin prevents the polymerization of actin, whereas it enhances it at low concentrations. By binding to PIP2, it inhibits the formation of IP3 and DG. The chain is Profilin-3 from Malus domestica (Apple).